The primary structure comprises 505 residues: Zealexin A1 synthase (505 aa).

Residues Ile7–Thr26 form a helical membrane-spanning segment. Residue Cys442 coordinates heme.

Belongs to the cytochrome P450 family. It depends on heme as a cofactor.

Its subcellular location is the membrane. The enzyme catalyses (S)-beta-macrocarpene + 3 reduced [NADPH--hemoprotein reductase] + 3 O2 = zealexin A1 + 3 oxidized [NADPH--hemoprotein reductase] + 4 H2O + 4 H(+). Its function is as follows. Involved in production of the antifungal phytoalexin zealexin A1. The enzyme sequentially oxidizes(S)-beta-macrocarpene via alcohol and aldehyde intermediates to form zealexin A1, a maize phytoalexin that provides biochemical protection against fungal infection. The chain is Zealexin A1 synthase from Zea mays (Maize).